The following is a 335-amino-acid chain: MDIEKSDKWTYVKERKVGEGTYAVVFLGRQKETNRRVAIKKIKVGQFKDGIDISALREIKFLRESRHDNVIELVDVFSTKSNLNIILEFLDSDLEMLIKDKFIVFQPAHIKSWMVMLLRGLHHIHSRFILHRDLKPNNLLISSDGVLKLADFGLSRDFGTPSHMSHQVITRWYRPPELFMGCRSYGTGVDMWSVGCIFAELMLRTPYLPGESDLDQLNVIFRALGTPEPEVIKSMQQLPNYVEMKHIPPPNGGMEALFSAAGHEEIDLLKMMLDYNPYRRPTAQQALEHHYFSALPKPTHPSLLPRKGGEEGIKHVSSDLQRQNNFPMRANIKFV.

Residues 11–292 form the Protein kinase domain; that stretch reads YVKERKVGEG…AQQALEHHYF (282 aa). ATP-binding positions include 17 to 25 and K40; that span reads VGEGTYAVV. Catalysis depends on D133, which acts as the Proton acceptor. S162 bears the Phosphoserine mark. Residue S165 is modified to Phosphoserine; by CAK. The residue at position 318 (S318) is a Phosphoserine.

It belongs to the protein kinase superfamily. CMGC Ser/Thr protein kinase family. CDC2/CDKX subfamily. As to quaternary structure, one of the nine subunits forming the core-TFIIH basal transcription factor. Interacts with mcs2 and tfb3.

The protein resides in the cytoplasm. It is found in the nucleus. The catalysed reaction is [DNA-directed RNA polymerase] + ATP = phospho-[DNA-directed RNA polymerase] + ADP + H(+). Protein kinase essential for cell proliferation, where it is required for completion of cytokinesis. Phosphorylates the C-terminal repeat domain (CTD) of RNA polymerase II. In Schizosaccharomyces pombe (strain 972 / ATCC 24843) (Fission yeast), this protein is Serine/threonine-protein kinase crk1 (crk1).